Reading from the N-terminus, the 1034-residue chain is DNA polymerase I B, chloroplastic/mitochondrial (1034 aa).

A chloroplast and mitochondrion-targeting transit peptide spans 1–55 (MGVSLRHLSPSSFWVSRRPRVSSSILSFLVPRRRILCTRKVAIIKGNAGYSTATD). The 3'-5' exonuclease domain occupies 270–468 (ACDTEVSRID…LYESMKKQLQ (199 aa)). Residues 700-1030 (HAIAALCEVC…SVDAKCAQNW (331 aa)) form a polymerase region.

The protein belongs to the DNA polymerase type-A family. Expressed in shoot apical meristem.

It is found in the mitochondrion. It localises to the plastid. The protein localises to the chloroplast. It carries out the reaction DNA(n) + a 2'-deoxyribonucleoside 5'-triphosphate = DNA(n+1) + diphosphate. Its activity is regulated as follows. Not inhibited by aphidicolin. Its function is as follows. In addition to polymerase activity, this DNA polymerase exhibits 5'-3' exonuclease activity. Required for DNA replication and accumulation in plastids and mitochondria. This Arabidopsis thaliana (Mouse-ear cress) protein is DNA polymerase I B, chloroplastic/mitochondrial (POLIB).